Reading from the N-terminus, the 120-residue chain is NADH-quinone oxidoreductase subunit A (120 aa).

A run of 3 helical transmembrane segments spans residues 10–30 (ILVF…MGWF), 65–85 (VAIL…WAVV), and 89–109 (IGWF…VGFI).

This sequence belongs to the complex I subunit 3 family. In terms of assembly, NDH-1 is composed of 14 different subunits. Subunits NuoA, H, J, K, L, M, N constitute the membrane sector of the complex.

It localises to the cell inner membrane. It catalyses the reaction a quinone + NADH + 5 H(+)(in) = a quinol + NAD(+) + 4 H(+)(out). Functionally, NDH-1 shuttles electrons from NADH, via FMN and iron-sulfur (Fe-S) centers, to quinones in the respiratory chain. The immediate electron acceptor for the enzyme in this species is believed to be ubiquinone. Couples the redox reaction to proton translocation (for every two electrons transferred, four hydrogen ions are translocated across the cytoplasmic membrane), and thus conserves the redox energy in a proton gradient. The protein is NADH-quinone oxidoreductase subunit A of Coxiella burnetii (strain Dugway 5J108-111).